Consider the following 154-residue polypeptide: uncharacterized protein (154 aa).

A signal peptide spans 1–21 (MSISSGSFAQPAAVVSSPGVT).

The protein belongs to the ivy family.

The protein resides in the periplasm. This is an uncharacterized protein from Yersinia pestis.